The following is a 517-amino-acid chain: Pentatricopeptide repeat-containing protein At5g42450, mitochondrial (517 aa).

Residues 1–23 (MLHMILSQRVILLRKYHSSANAL) constitute a mitochondrion transit peptide. 9 PPR repeats span residues 57–91 (DVIS…GIRP), 92–126 (NEFT…GLAS), 127–157 (NVFV…TRDP), 158–188 (NVVS…MPER), 189–223 (SVVT…GVVI), 225–259 (NEST…LGKR), 261–291 (NVFV…LEEE), 294–329 (NIVS…NLRP), and 368–398 (ELEH…MPLD). The tract at residues 403–478 (FWKALLGGCQ…FTGCSWIEVR (76 aa)) is type E motif. Positions 479–509 (DQIRVFVNADKNNELKDEVYRMLALVSQHLE) are type E(+) motif.

The protein belongs to the PPR family. PCMP-E subfamily.

It is found in the mitochondrion. This Arabidopsis thaliana (Mouse-ear cress) protein is Pentatricopeptide repeat-containing protein At5g42450, mitochondrial (PCMP-E102).